Reading from the N-terminus, the 430-residue chain is Histidine--tRNA ligase (430 aa).

The protein belongs to the class-II aminoacyl-tRNA synthetase family. As to quaternary structure, homodimer.

Its subcellular location is the cytoplasm. It carries out the reaction tRNA(His) + L-histidine + ATP = L-histidyl-tRNA(His) + AMP + diphosphate + H(+). This is Histidine--tRNA ligase from Acinetobacter baumannii (strain AB307-0294).